The following is a 986-amino-acid chain: P3N-PIPO polyprotein (986 aa).

Positions lysine 141–phenylalanine 284 constitute a Peptidase S30 domain. Residues histidine 192, aspartate 201, and serine 235 each act as for P1 proteinase activity in the active site. The Involved in interaction with stylet and aphid transmission signature appears at lysine 334–cysteine 337. The Involved in virions binding and aphid transmission signature appears at proline 592–lysine 594. The Peptidase C6 domain occupies leucine 618–glycine 740. Active-site for helper component proteinase activity residues include cysteine 626 and histidine 699.

This sequence belongs to the potyviridae P3N-PIPO polyprotein family. In terms of assembly, interacts (via PIPO domain) with host PCaP1 protein; this interaction may help to anchor the movement complex to the plasma membrane from which the complex could move to the plasmodesmata. Post-translationally, potyviral RNA is expressed as two polyproteins which undergo post-translational proteolytic processing. Genome polyprotein is processed by NIa-pro, P1 and HC-pro proteinases resulting in the production of at least ten individual proteins. P3N-PIPO is cleaved by P1 and HC-pro proteinases resulting in the production of three individual proteins. The P1 proteinase and the HC-pro cleave only their respective C-termini autocatalytically.

It localises to the host cell junction. The protein localises to the host plasmodesma. The enzyme catalyses Hydrolyzes a Gly-|-Gly bond at its own C-terminus, commonly in the sequence -Tyr-Xaa-Val-Gly-|-Gly, in the processing of the potyviral polyprotein.. Its function is as follows. Required for aphid transmission and also has proteolytic activity. Only cleaves a Gly-Gly dipeptide at its own C-terminus. Interacts with virions and aphid stylets. Acts as a suppressor of RNA-mediated gene silencing, also known as post-transcriptional gene silencing (PTGS), a mechanism of plant viral defense that limits the accumulation of viral RNAs. May have RNA-binding activity. Functionally, allows efficient cell to cell propagation, by bypassing the host cell wall barrier. Transports viral genome to neighboring plant cells directly through plasmosdesmata, without any budding. This Potato virus Y (strain N) (PVY) protein is P3N-PIPO polyprotein.